The chain runs to 161 residues: EP300-interacting inhibitor of differentiation 2B (161 aa).

Disordered stretches follow at residues 1–26 (MAEPTGLLEMSELPGDSSVPQVGTAS) and 54–77 (ARSMARMPGPVPGPIPSSVPGLAS).

In terms of assembly, homodimer and heterodimer with EID2. Interacts with HDAC1 and HDAC2.

It localises to the nucleus. Acts as a repressor of MYOD-dependent transcription, glucocorticoid receptor-dependent transcription, and muscle differentiation. The chain is EP300-interacting inhibitor of differentiation 2B from Homo sapiens (Human).